The following is a 363-amino-acid chain: 3-isopropylmalate dehydrogenase (363 aa).

Residue 78-91 participates in NAD(+) binding; sequence GPKWEHLPPAEQPE. Residues Arg-99, Arg-109, Arg-138, and Asp-227 each coordinate substrate. The Mg(2+) site is built by Asp-227, Asp-251, and Asp-255. 285-297 is a binding site for NAD(+); it reads GSAPDIAGKGIAN.

Belongs to the isocitrate and isopropylmalate dehydrogenases family. LeuB type 1 subfamily. Homodimer. Requires Mg(2+) as cofactor. It depends on Mn(2+) as a cofactor.

It localises to the cytoplasm. The catalysed reaction is (2R,3S)-3-isopropylmalate + NAD(+) = 4-methyl-2-oxopentanoate + CO2 + NADH. The protein operates within amino-acid biosynthesis; L-leucine biosynthesis; L-leucine from 3-methyl-2-oxobutanoate: step 3/4. Catalyzes the oxidation of 3-carboxy-2-hydroxy-4-methylpentanoate (3-isopropylmalate) to 3-carboxy-4-methyl-2-oxopentanoate. The product decarboxylates to 4-methyl-2 oxopentanoate. The chain is 3-isopropylmalate dehydrogenase from Photorhabdus laumondii subsp. laumondii (strain DSM 15139 / CIP 105565 / TT01) (Photorhabdus luminescens subsp. laumondii).